We begin with the raw amino-acid sequence, 1067 residues long: Lon protease homolog, mitochondrial (1067 aa).

A mitochondrion-targeting transit peptide spans 1–36 (MITRLSGACLRRSGAKRNWPREHLVHRSLLASFSTT). Over residues 55 to 82 (KSKEPKDNKPLDNKNDPKKTHNEDESHT) the composition is skewed to basic and acidic residues. 2 disordered regions span residues 55–142 (KSKE…MPLN) and 262–314 (IPPK…ESTP). Positions 128 to 139 (FELGGEENEDEM) are enriched in acidic residues. A Lon N-terminal domain is found at 162 to 425 (LLALPIARRP…KALYVLKKEL (264 aa)). Residues 293 to 311 (VKSDLKQDNGKEEPEKEVE) show a composition bias toward basic and acidic residues. An ATP-binding site is contributed by 578–585 (GPPGVGKT). The segment at 791–820 (NSKEKSTGKSGKKTSPQSSEDAANKEASSV) is disordered. A Lon proteolytic domain is found at 854–1040 (TTPPGVVMGL…DDVFKRVFSN (187 aa)). Catalysis depends on residues serine 946 and lysine 989.

Belongs to the peptidase S16 family. In terms of assembly, homohexamer or homoheptamer. Organized in a ring with a central cavity.

It localises to the mitochondrion matrix. It carries out the reaction Hydrolysis of proteins in presence of ATP.. Its function is as follows. ATP-dependent serine protease that mediates the selective degradation of misfolded, unassembled or oxidatively damaged polypeptides as well as certain short-lived regulatory proteins in the mitochondrial matrix. May also have a chaperone function in the assembly of inner membrane protein complexes. Participates in the regulation of mitochondrial gene expression and in the maintenance of the integrity of the mitochondrial genome. Binds to mitochondrial DNA in a site-specific manner. In Schizosaccharomyces pombe (strain 972 / ATCC 24843) (Fission yeast), this protein is Lon protease homolog, mitochondrial (pim1).